The sequence spans 510 residues: MSAKKPMALVILDGYGHRETQADNAITNANTPVLDGLMANQPNTLISASGMDVGLPDGQMGNSEVGHTNIGAGRVVYQDLTRITKAISDGEFQQNETLVNAIDKAVKAGKAVHIMGLMSPGGVHSHEDHIYAAVEMAAARGAEKIYLHCFLDGRDTPPRSAENSLKNFQELFAKLGKGRIASLVGRYYAMDRDNNWERVQKAYDLMTEAKAEFTFATAVEGLEAAYAREENDEFVQATEIKAEGEESAAIVDGDAVIFMNYRADRARQITRTFVPSFDGFTRNVFPAIDFVMLTQYAADIPLLCAFAPASLENTYGEWLSKEGKTQLRISETEKYAHVTFFFNGGIEDEFEGEERQLVASPKVATYDLQPEMSAPELTEKLVAAIKSGKYDAIVCNFPNCDMVGHTGVYDATVKAVESLDECIGKVVEAIKEVDGQLLITADHGNAEMMIDPETGGVHTAHTNLPVPLIYVGSKAIEFKEGGKLSDLAPTMLALTDTAIPAEMSGEVLFK.

Mn(2+) is bound by residues Asp-13 and Ser-63. The Phosphoserine intermediate role is filled by Ser-63. Residues His-124, Arg-154–Asp-155, Arg-186, Arg-192, Arg-262–Arg-265, and Lys-334 contribute to the substrate site. Residues Asp-401, His-405, Asp-442, His-443, and His-461 each contribute to the Mn(2+) site.

It belongs to the BPG-independent phosphoglycerate mutase family. As to quaternary structure, monomer. Requires Mn(2+) as cofactor.

The catalysed reaction is (2R)-2-phosphoglycerate = (2R)-3-phosphoglycerate. It functions in the pathway carbohydrate degradation; glycolysis; pyruvate from D-glyceraldehyde 3-phosphate: step 3/5. Catalyzes the interconversion of 2-phosphoglycerate and 3-phosphoglycerate. This Aliivibrio fischeri (strain MJ11) (Vibrio fischeri) protein is 2,3-bisphosphoglycerate-independent phosphoglycerate mutase.